Reading from the N-terminus, the 271-residue chain is Solute carrier family 66 member 2 (271 aa).

The next 3 helical transmembrane spans lie at 8 to 28, 49 to 69, and 76 to 96; these read WLLV…MVFG, FSTY…LFWF, and PLLW…KLCT. Residues 14 to 80 enclose the PQ-loop 1 domain; that stretch reads HQLVSWGAAA…RRFESPLLWQ (67 aa). A Phosphoserine modification is found at serine 110. 3 helical membrane passes run 145-165, 168-188, and 232-252; these read DYVQ…YLSI, ALFV…LGVP, and VCGL…YAFA. A PQ-loop 2 domain is found at 178–233; that stretch reads AVLTEAMLGVPQLYRNHRHQSTEGMSIKMVLMWTSGDAFKTAYFLLKGAPLQFSVC.

It is found in the membrane. This chain is Solute carrier family 66 member 2, found in Homo sapiens (Human).